The primary structure comprises 102 residues: Large ribosomal subunit protein uL23 (102 aa).

The protein belongs to the universal ribosomal protein uL23 family. In terms of assembly, part of the 50S ribosomal subunit. Contacts protein L29, and trigger factor when it is bound to the ribosome.

In terms of biological role, one of the early assembly proteins it binds 23S rRNA. One of the proteins that surrounds the polypeptide exit tunnel on the outside of the ribosome. Forms the main docking site for trigger factor binding to the ribosome. The chain is Large ribosomal subunit protein uL23 from Cutibacterium acnes (strain DSM 16379 / KPA171202) (Propionibacterium acnes).